Here is a 170-residue protein sequence, read N- to C-terminus: Calcineurin subunit B type 2 (170 aa).

4 consecutive EF-hand domains span residues 18–46 (DEIR…FMSL), 50–85 (QQNP…FSVK), 87–122 (DKLS…MVGN), and 128–163 (QLQQ…TDIH). Ca(2+)-binding residues include Asp31, Asp33, Ser35, Glu42, Asp63, Asp65, Asn67, Glu69, Glu74, Asp100, Asp102, Asp104, Tyr106, Glu111, Asp141, Asp143, Asp145, Lys147, and Glu152. At Ser35 the chain carries Phosphoserine.

This sequence belongs to the calcineurin regulatory subunit family. As to quaternary structure, composed of a catalytic subunit (A) and a regulatory subunit (B). Interacts with sra.

Its function is as follows. Calcineurin is a calcium-binding and calmodulin-binding protein found in all cells from yeast to mammals, and a calcium-dependent, calmodulin-stimulated protein phosphatase. This is Calcineurin subunit B type 2 (CanB2) from Drosophila melanogaster (Fruit fly).